Here is a 203-residue protein sequence, read N- to C-terminus: Octanoyltransferase (203 aa).

The BPL/LPL catalytic domain occupies I32–S203. Residues R71–H78, S138–G140, and G151–A153 each bind substrate. The active-site Acyl-thioester intermediate is C169.

This sequence belongs to the LipB family.

It is found in the cytoplasm. It carries out the reaction octanoyl-[ACP] + L-lysyl-[protein] = N(6)-octanoyl-L-lysyl-[protein] + holo-[ACP] + H(+). The protein operates within protein modification; protein lipoylation via endogenous pathway; protein N(6)-(lipoyl)lysine from octanoyl-[acyl-carrier-protein]: step 1/2. Functionally, catalyzes the transfer of endogenously produced octanoic acid from octanoyl-acyl-carrier-protein onto the lipoyl domains of lipoate-dependent enzymes. Lipoyl-ACP can also act as a substrate although octanoyl-ACP is likely to be the physiological substrate. The sequence is that of Octanoyltransferase from Buchnera aphidicola subsp. Baizongia pistaciae (strain Bp).